The primary structure comprises 216 residues: Acyl-homoserine-lactone synthase (216 aa).

It belongs to the autoinducer synthase family.

The catalysed reaction is a fatty acyl-[ACP] + S-adenosyl-L-methionine = an N-acyl-L-homoserine lactone + S-methyl-5'-thioadenosine + holo-[ACP] + H(+). Required for the synthesis of OHHL (N-(3-oxohexanoyl)-L-homoserine lactone), an autoinducer molecule which binds to CarR and thus acts in the control of the biosynthesis of carbapenem antibiotics. The sequence is that of Acyl-homoserine-lactone synthase (carI) from Pectobacterium carotovorum subsp. carotovorum (Erwinia carotovora subsp. carotovora).